The following is a 344-amino-acid chain: Dihydroorotase (344 aa).

Positions 13 and 15 each coordinate Zn(2+). Residues 15 to 17 (HFR) and Asn41 each bind substrate. Zn(2+)-binding residues include Lys98, His135, and His173. Lys98 carries the N6-carboxylysine modification. Residue His135 coordinates substrate. Leu218 is a substrate binding site. Asp246 serves as a coordination point for Zn(2+). Asp246 is a catalytic residue. His250 and Ala262 together coordinate substrate.

The protein belongs to the metallo-dependent hydrolases superfamily. DHOase family. Class II DHOase subfamily. In terms of assembly, homodimer. Zn(2+) serves as cofactor.

The enzyme catalyses (S)-dihydroorotate + H2O = N-carbamoyl-L-aspartate + H(+). The protein operates within pyrimidine metabolism; UMP biosynthesis via de novo pathway; (S)-dihydroorotate from bicarbonate: step 3/3. Functionally, catalyzes the reversible cyclization of carbamoyl aspartate to dihydroorotate. The polypeptide is Dihydroorotase (Pseudoalteromonas atlantica (strain T6c / ATCC BAA-1087)).